A 188-amino-acid polypeptide reads, in one-letter code: Elongation factor P (188 aa).

An N6-(3,6-diaminohexanoyl)-5-hydroxylysine modification is found at Lys34.

The protein belongs to the elongation factor P family. In terms of processing, may be beta-lysylated on the epsilon-amino group of Lys-34 by the combined action of EpmA and EpmB, and then hydroxylated on the C5 position of the same residue by EpmC (if this protein is present). Lysylation is critical for the stimulatory effect of EF-P on peptide-bond formation. The lysylation moiety may extend toward the peptidyltransferase center and stabilize the terminal 3-CCA end of the tRNA. Hydroxylation of the C5 position on Lys-34 may allow additional potential stabilizing hydrogen-bond interactions with the P-tRNA.

The protein resides in the cytoplasm. It functions in the pathway protein biosynthesis; polypeptide chain elongation. Functionally, involved in peptide bond synthesis. Alleviates ribosome stalling that occurs when 3 or more consecutive Pro residues or the sequence PPG is present in a protein, possibly by augmenting the peptidyl transferase activity of the ribosome. Modification of Lys-34 is required for alleviation. The polypeptide is Elongation factor P (Pasteurella multocida (strain Pm70)).